Here is a 1270-residue protein sequence, read N- to C-terminus: DNA-directed RNA polymerase subunit beta (1270 aa).

This sequence belongs to the RNA polymerase beta chain family. In terms of assembly, the RNAP catalytic core consists of 2 alpha, 1 beta, 1 beta' and 1 omega subunit. When a sigma factor is associated with the core the holoenzyme is formed, which can initiate transcription.

It catalyses the reaction RNA(n) + a ribonucleoside 5'-triphosphate = RNA(n+1) + diphosphate. In terms of biological role, DNA-dependent RNA polymerase catalyzes the transcription of DNA into RNA using the four ribonucleoside triphosphates as substrates. This chain is DNA-directed RNA polymerase subunit beta, found in Phocaeicola vulgatus (strain ATCC 8482 / DSM 1447 / JCM 5826 / CCUG 4940 / NBRC 14291 / NCTC 11154) (Bacteroides vulgatus).